We begin with the raw amino-acid sequence, 308 residues long: MVWIWLGVGLLGGTGLASLVLAISLFTQRRGRKRSDETSSRGRLPAAASDKRGACACCYRNPKEDVVEPLDLELGLMRVATHPPTPQVPRCTSLYIGEDGLPIDKPEFPPARFEIPDVSTPGTPTSIDRSPSHCSSLSSLSSSTSVDTVLHQPPPSWKPPPPPGRKKRPPTPPVRAPTTRLSSHRPPTPIPAPRKNLSTPPTKKTPPPTKPKPVGWTPPVTPRPFPKTPTPQKPPRNPRLPRTVGLENLSKVGLSCPCPRPRTPTEPTTLPIVSVSELAPPPRWSDIEELLEQAVQSVMKDAESMQMT.

Residues 1-22 (MVWIWLGVGLLGGTGLASLVLA) form the signal peptide. The segment at 103–274 (IDKPEFPPAR…TEPTTLPIVS (172 aa)) is disordered. Polar residues predominate over residues 120-129 (TPGTPTSIDR). A compositionally biased stretch (low complexity) spans 132–145 (SHCSSLSSLSSSTS). 2 stretches are compositionally biased toward pro residues: residues 152–163 (QPPPSWKPPPPP) and 219–238 (PVTP…PRNP).

It belongs to the HCMV UL135 family. As to quaternary structure, interacts with host components of the WAVE2 complex ABI1, NAP1 and WAVE2. Also interacts with host ABI2 and TLN1.

The protein localises to the host cell membrane. It localises to the host Golgi apparatus. In terms of biological role, remodels the host actin cytoskeleton in order to impair immune recognition of infected cells. Mechanistically, interacts with members of the host WAVE2 complex and redirects the complex to the plasma membrane. In turn, the efficiency of immune synapse formation is greatly reduced. This Homo sapiens (Human) protein is Protein UL135 (UL135).